The following is a 503-amino-acid chain: Betaine aldehyde dehydrogenase 2 (503 aa).

Position 161-170 (161-170) interacts with betaine aldehyde; that stretch reads WNYPLLMATW. Residue 238-243 coordinates NAD(+); that stretch reads GSYETG. Residues E260, 292-295, and C453 each bind betaine aldehyde; that span reads QICS. Catalysis depends on residues E260 and C294. 4-aminobutanal-binding positions include 260-261 and C294; that span reads EL. Residue W459 participates in 4-aminobutanal binding. Residues 501–503 carry the Microbody targeting signal motif; sequence SKL.

It belongs to the aldehyde dehydrogenase family. In terms of assembly, homodimer.

It is found in the peroxisome. It localises to the cytoplasm. The enzyme catalyses betaine aldehyde + NAD(+) + H2O = glycine betaine + NADH + 2 H(+). The protein operates within amine and polyamine biosynthesis; betaine biosynthesis via choline pathway; betaine from betaine aldehyde: step 1/1. Functionally, dehydrogenase that can use N-acetyl-c-aminobutyraldehyde (NAGABald), gamma-guanidinobutyraldehyde (GGBald), betaine aldehyde (Bet-ald), gamma-aminobutyraldehyde (GAB-ald), acetaldehyde, 4-aminobutylaldehyde (AB-ald), 3-aminopropionaldehyde (AP-ald), 4-N-trimethylaminobutyraldehyde (TMAB-ald) and 3-N-trimethylaminopropionaldehyde (TMAP-ald) as substrates. Catalyzes the oxidation of GAB-ald more efficiently than Bet-ald. Mediates the conversion of GAB-ald into gamma-aminobutyric acid (GABA), and prevents the formation of 2-acetyl-1-pyrroline (2AP) which gives fragrant rice its aromatic properties. The sequence is that of Betaine aldehyde dehydrogenase 2 (BADH2) from Oryza sativa subsp. indica (Rice).